Reading from the N-terminus, the 301-residue chain is MYSPVESEQGFNFKPELPTSSAYYRLLKKLRRQVGHAIRDFKMIEDGDKVMVCVSGGKDSYTLLDILLQFKRIAPINFDIVAVNLDQKQPGFPEDVLPRYMEENNIPYYILEKDTYTITKRLTPEGKTYCAVCSRLRRGSLYGFAQEIGATKVALGHHRDDIIATFFLNLFHGGSLKAMPPKLLSSDKKNILIRPLAYVEEKDIIKYADLRKFPIIPCNLCGSQENLQRAMLNEMLREWDKQYPKRLHSIFGALQNVSPSQLADRDLFDFEILDSQRELDFKDPEEMKKRLDIVNLSFAAD.

Positions 55 to 60 (SGGKDS) match the PP-loop motif motif. [4Fe-4S] cluster-binding residues include C130, C133, and C221.

Belongs to the TtcA family. Homodimer. The cofactor is Mg(2+). [4Fe-4S] cluster serves as cofactor.

It localises to the cytoplasm. It carries out the reaction cytidine(32) in tRNA + S-sulfanyl-L-cysteinyl-[cysteine desulfurase] + AH2 + ATP = 2-thiocytidine(32) in tRNA + L-cysteinyl-[cysteine desulfurase] + A + AMP + diphosphate + H(+). It functions in the pathway tRNA modification. In terms of biological role, catalyzes the ATP-dependent 2-thiolation of cytidine in position 32 of tRNA, to form 2-thiocytidine (s(2)C32). The sulfur atoms are provided by the cysteine/cysteine desulfurase (IscS) system. This is tRNA-cytidine(32) 2-sulfurtransferase from Acinetobacter baylyi (strain ATCC 33305 / BD413 / ADP1).